Reading from the N-terminus, the 606-residue chain is NADH-ubiquinone oxidoreductase chain 5 (606 aa).

Helical transmembrane passes span 1–21 (MNIFPSLMLTSLFTLTLPIIA), 38–58 (NIISFAFIISLIPTMMFIYSG), 87–107 (MIFVPVALFVTWSIMEFSIWY), 114–134 (ITQFFKYLLMFLITMMILVTA), 140–160 (LFIGWEGVGIMSFLLIGWWYG), 171–191 (AILYNRIGDIGFIMSMAWFLS), 213–233 (LMGLLLAATGKSAQFGLHPWL), 241–261 (TPVSALLHSSTMVVAGVFLLI), 273–293 (AQTLTLCLGAITTLFTAICAL), 301–320 (IIAFSTSSQLGLMIVTIGIN), 325–347 (AFLHICTHAFFKAMLFMCSGSII), 366–386 (MPFTATSLIIGSFALTGMPFL), 409–429 (LLMTLIATSLTAAYSTRMIFF), 457–477 (LLIGSIFAGFFISNNIYPTTT), 488–508 (LMALIVTILGFALALELSLAT), and 582–602 (GLIKLYFLSFLITLTLSLLLL).

It belongs to the complex I subunit 5 family. As to quaternary structure, core subunit of respiratory chain NADH dehydrogenase (Complex I) which is composed of 45 different subunits.

Its subcellular location is the mitochondrion inner membrane. It catalyses the reaction a ubiquinone + NADH + 5 H(+)(in) = a ubiquinol + NAD(+) + 4 H(+)(out). Core subunit of the mitochondrial membrane respiratory chain NADH dehydrogenase (Complex I) which catalyzes electron transfer from NADH through the respiratory chain, using ubiquinone as an electron acceptor. Essential for the catalytic activity and assembly of complex I. The chain is NADH-ubiquinone oxidoreductase chain 5 (MT-ND5) from Rhinoceros unicornis (Greater Indian rhinoceros).